A 279-amino-acid chain; its full sequence is Tryptophan prenyltransferase ComQ (279 aa).

Mg(2+) is bound by residues Asp-67 and Asp-71.

Belongs to the FPP/GGPP synthase family. Requires Mg(2+) as cofactor.

It localises to the cell membrane. The enzyme catalyses L-tryptophyl-[protein] + (2E)-geranyl diphosphate = (2S,3R)-3-geranyl-2,3-dihydro-2,N(alpha)-cyclo-L-tryptophyl-[protein] + diphosphate. Part of a major quorum-sensing system that regulates the development of genetic competence. Involved in the maturation of the competence pheromone ComX. Acts by catalyzing the transfer of a geranyl group on the ComX pheromone. Cannot use farnesyl diphosphate (FPP). This is Tryptophan prenyltransferase ComQ from Bacillus spizizenii (Bacillus subtilis subsp. spizizenii).